Here is a 902-residue protein sequence, read N- to C-terminus: Protein translocase subunit SecA (902 aa).

ATP-binding positions include Gln-87, 105–109 (GEGKT), and Asp-512. The tract at residues 851-902 (LARQQQLSHQAPVEELTQGSAAAAQEGRKVGRNDPCPCGSGKKFKHCHGKLQ) is disordered. 4 residues coordinate Zn(2+): Cys-886, Cys-888, Cys-897, and His-898. Residues 892–902 (KKFKHCHGKLQ) are compositionally biased toward basic residues.

It belongs to the SecA family. In terms of assembly, monomer and homodimer. Part of the essential Sec protein translocation apparatus which comprises SecA, SecYEG and auxiliary proteins SecDF-YajC and YidC. The cofactor is Zn(2+).

It localises to the cell inner membrane. The protein resides in the cytoplasm. The catalysed reaction is ATP + H2O + cellular proteinSide 1 = ADP + phosphate + cellular proteinSide 2.. Part of the Sec protein translocase complex. Interacts with the SecYEG preprotein conducting channel. Has a central role in coupling the hydrolysis of ATP to the transfer of proteins into and across the cell membrane, serving both as a receptor for the preprotein-SecB complex and as an ATP-driven molecular motor driving the stepwise translocation of polypeptide chains across the membrane. In Sodalis glossinidius (strain morsitans), this protein is Protein translocase subunit SecA.